We begin with the raw amino-acid sequence, 296 residues long: Nucleotide-binding protein M28_Spy0517 (296 aa).

13–20 contributes to the ATP binding site; the sequence is GMSGAGKT. 63 to 66 is a binding site for GTP; it reads DMRS.

This sequence belongs to the RapZ-like family.

Its function is as follows. Displays ATPase and GTPase activities. The chain is Nucleotide-binding protein M28_Spy0517 from Streptococcus pyogenes serotype M28 (strain MGAS6180).